The primary structure comprises 542 residues: Doublesex- and mab-3-related transcription factor A2 (542 aa).

The DM DNA-binding region spans 70–117; that stretch reads CARCRNHGVVSALKGHKRYCRWKDCLCAKCTLIAERQRVMAAQVALRR. Residues 201–316 form a disordered region; sequence LQAGRPGSPL…GGSGPRQRTP (116 aa). A DMA domain is found at 314 to 349; it reads RTPLDILTRVFPGHRRGVLELVLQGCGGDVVQAIEQ.

Belongs to the DMRT family. Expressed in testis.

It localises to the nucleus. Functionally, may be involved in sexual development. This chain is Doublesex- and mab-3-related transcription factor A2 (DMRTA2), found in Homo sapiens (Human).